The primary structure comprises 174 residues: Guided entry of tail-anchored proteins factor 1 (174 aa).

The Lumenal portion of the chain corresponds to 1–8 (MSASETDR). Residues 9–29 (WAWLLVLCFVFGCNVLRILLP) traverse the membrane as a helical segment. At 30-99 (TLSSFISRVL…VKARTAQLAK (70 aa)) the chain is on the cytoplasmic side. A coiled-coil region spans residues 39–94 (LQKDAEQESQMRAEIQSMKQELSTVNMMDEFARYARLERKINKMTDKLKTHVKART). The tract at residues 39 to 97 (LQKDAEQESQMRAEIQSMKQELSTVNMMDEFARYARLERKINKMTDKLKTHVKARTAQL) is interaction with GET3/TRC40. Residues 100–120 (IKWFISVAFYVLQAALMISLI) traverse the membrane as a helical segment. Residues 121-148 (WKYYSVPVAVVPSKWITPLDRLVAFPTR) are Lumenal-facing. A helical membrane pass occupies residues 149 to 169 (VAGGIGVTCWILVCNKVVAII). Topologically, residues 170 to 174 (LHPFS) are cytoplasmic.

The protein belongs to the WRB/GET1 family. In terms of assembly, component of the Golgi to ER traffic (GET) complex, which is composed of GET1, CAMLG/GET2 and GET3. Within the complex, GET1 and CAMLG form a heterotetramer which is stabilized by phosphatidylinositol binding and which binds to the GET3 homodimer. Interacts with CAMLG/GET2 (via C-terminus). GET3 shows a higher affinity for CAMLG than for GET1.

It localises to the endoplasmic reticulum membrane. Required for the post-translational delivery of tail-anchored (TA) proteins to the endoplasmic reticulum. Together with CAMLG/GET2, acts as a membrane receptor for soluble GET3/TRC40, which recognizes and selectively binds the transmembrane domain of TA proteins in the cytosol. Required to ensure correct topology and ER insertion of CAMLG. The polypeptide is Guided entry of tail-anchored proteins factor 1 (Rattus norvegicus (Rat)).